A 485-amino-acid polypeptide reads, in one-letter code: Aspartyl/glutamyl-tRNA(Asn/Gln) amidotransferase subunit B (485 aa).

This sequence belongs to the GatB/GatE family. GatB subfamily. Heterotrimer of A, B and C subunits.

It catalyses the reaction L-glutamyl-tRNA(Gln) + L-glutamine + ATP + H2O = L-glutaminyl-tRNA(Gln) + L-glutamate + ADP + phosphate + H(+). It carries out the reaction L-aspartyl-tRNA(Asn) + L-glutamine + ATP + H2O = L-asparaginyl-tRNA(Asn) + L-glutamate + ADP + phosphate + 2 H(+). Functionally, allows the formation of correctly charged Asn-tRNA(Asn) or Gln-tRNA(Gln) through the transamidation of misacylated Asp-tRNA(Asn) or Glu-tRNA(Gln) in organisms which lack either or both of asparaginyl-tRNA or glutaminyl-tRNA synthetases. The reaction takes place in the presence of glutamine and ATP through an activated phospho-Asp-tRNA(Asn) or phospho-Glu-tRNA(Gln). The protein is Aspartyl/glutamyl-tRNA(Asn/Gln) amidotransferase subunit B of Anaplasma marginale (strain St. Maries).